Here is a 285-residue protein sequence, read N- to C-terminus: G patch domain-containing protein 11 (285 aa).

Residues 51-87 (MLRQIREARRKEEKQQEANLKNRQKSLKEEEQERRDI) are a coiled coil. Residues 59–84 (RRKEEKQQEANLKNRQKSLKEEEQER) are disordered. Residues 95-141 (CENKGFALLQKMGYKSGQALGKSGGGIVEPIPLNIKTGKSGIGHEAS) enclose the G-patch domain. Ser-141 bears the Phosphoserine mark. N6-acetyllysine is present on Lys-149. Residues 218–235 (EETEEDEEEKEQDEDEYK) are compositionally biased toward acidic residues. The segment at 218–237 (EETEEDEEEKEQDEDEYKSE) is disordered.

Belongs to the GPATCH11 family.

It is found in the chromosome. The protein resides in the centromere. The protein localises to the kinetochore. The protein is G patch domain-containing protein 11 (GPATCH11) of Homo sapiens (Human).